A 202-amino-acid chain; its full sequence is Imidazoleglycerol-phosphate dehydratase (202 aa).

Belongs to the imidazoleglycerol-phosphate dehydratase family.

It is found in the cytoplasm. It carries out the reaction D-erythro-1-(imidazol-4-yl)glycerol 3-phosphate = 3-(imidazol-4-yl)-2-oxopropyl phosphate + H2O. The protein operates within amino-acid biosynthesis; L-histidine biosynthesis; L-histidine from 5-phospho-alpha-D-ribose 1-diphosphate: step 6/9. This chain is Imidazoleglycerol-phosphate dehydratase, found in Sinorhizobium medicae (strain WSM419) (Ensifer medicae).